The primary structure comprises 405 residues: Glucose-1-phosphate adenylyltransferase (405 aa).

Alpha-D-glucose 1-phosphate is bound by residues Y96, G161, 176-177 (EK), and S194.

This sequence belongs to the bacterial/plant glucose-1-phosphate adenylyltransferase family. As to quaternary structure, homotetramer.

It carries out the reaction alpha-D-glucose 1-phosphate + ATP + H(+) = ADP-alpha-D-glucose + diphosphate. The protein operates within glycan biosynthesis; glycogen biosynthesis. Functionally, involved in the biosynthesis of ADP-glucose, a building block required for the elongation reactions to produce glycogen. Catalyzes the reaction between ATP and alpha-D-glucose 1-phosphate (G1P) to produce pyrophosphate and ADP-Glc. This is Glucose-1-phosphate adenylyltransferase from Photobacterium profundum (strain SS9).